Here is a 255-residue protein sequence, read N- to C-terminus: Putative glycyl-radical enzyme activating enzyme MJ1632 (255 aa).

Residues 30 to 245 (SHISLSDKIT…SNVSCSLDFK (216 aa)) enclose the Radical SAM core domain. 3 residues coordinate [4Fe-4S] cluster: cysteine 45, cysteine 49, and cysteine 52. S-adenosyl-L-methionine is bound by residues 51–53 (YCF), glycine 88, and 134–136 (DLK).

This sequence belongs to the organic radical-activating enzymes family. [4Fe-4S] cluster is required as a cofactor.

It catalyses the reaction glycyl-[protein] + reduced [flavodoxin] + S-adenosyl-L-methionine = glycin-2-yl radical-[protein] + semiquinone [flavodoxin] + 5'-deoxyadenosine + L-methionine + H(+). The protein is Putative glycyl-radical enzyme activating enzyme MJ1632 of Methanocaldococcus jannaschii (strain ATCC 43067 / DSM 2661 / JAL-1 / JCM 10045 / NBRC 100440) (Methanococcus jannaschii).